The sequence spans 239 residues: Leucyl/phenylalanyl-tRNA--protein transferase (239 aa).

The protein belongs to the L/F-transferase family.

The protein resides in the cytoplasm. The enzyme catalyses N-terminal L-lysyl-[protein] + L-leucyl-tRNA(Leu) = N-terminal L-leucyl-L-lysyl-[protein] + tRNA(Leu) + H(+). It catalyses the reaction N-terminal L-arginyl-[protein] + L-leucyl-tRNA(Leu) = N-terminal L-leucyl-L-arginyl-[protein] + tRNA(Leu) + H(+). The catalysed reaction is L-phenylalanyl-tRNA(Phe) + an N-terminal L-alpha-aminoacyl-[protein] = an N-terminal L-phenylalanyl-L-alpha-aminoacyl-[protein] + tRNA(Phe). Functionally, functions in the N-end rule pathway of protein degradation where it conjugates Leu, Phe and, less efficiently, Met from aminoacyl-tRNAs to the N-termini of proteins containing an N-terminal arginine or lysine. In Aliivibrio fischeri (strain MJ11) (Vibrio fischeri), this protein is Leucyl/phenylalanyl-tRNA--protein transferase.